Reading from the N-terminus, the 354-residue chain is Ferredoxin--NADP reductase (354 aa).

Residues Asp-39, Gln-47, Tyr-52, Val-92, Phe-127, Asp-296, and Thr-337 each coordinate FAD.

It belongs to the ferredoxin--NADP reductase type 2 family. In terms of assembly, homodimer. FAD is required as a cofactor.

The enzyme catalyses 2 reduced [2Fe-2S]-[ferredoxin] + NADP(+) + H(+) = 2 oxidized [2Fe-2S]-[ferredoxin] + NADPH. This chain is Ferredoxin--NADP reductase, found in Albidiferax ferrireducens (strain ATCC BAA-621 / DSM 15236 / T118) (Rhodoferax ferrireducens).